Reading from the N-terminus, the 146-residue chain is Basic phospholipase A2 (146 aa).

A signal peptide spans 1-21; sequence MNPAHLLVLAAVCVSLLGASS. Residues 22–27 constitute a propeptide that is removed on maturation; sequence VPPRPL. 7 disulfides stabilise this stretch: C38/C97, C52/C145, C54/C70, C69/C127, C76/C120, C86/C113, and C106/C118. The Ca(2+) site is built by Y53, G55, and G57. The active site involves H73. D74 is a Ca(2+) binding site. N109 carries N-linked (GlcNAc...) asparagine glycosylation. Residue D121 is part of the active site.

This sequence belongs to the phospholipase A2 family. Group I subfamily. D49 sub-subfamily. The cofactor is Ca(2+). In terms of tissue distribution, expressed by the venom gland.

It is found in the secreted. The catalysed reaction is a 1,2-diacyl-sn-glycero-3-phosphocholine + H2O = a 1-acyl-sn-glycero-3-phosphocholine + a fatty acid + H(+). PLA2 catalyzes the calcium-dependent hydrolysis of the 2-acyl groups in 3-sn-phosphoglycerides. This chain is Basic phospholipase A2, found in Micrurus corallinus (Brazilian coral snake).